Reading from the N-terminus, the 276-residue chain is Dermonecrotic toxin LlSicTox-alphaIV1i (276 aa).

Histidine 5 is a catalytic residue. Positions 25 and 27 each coordinate Mg(2+). The active-site Nucleophile is histidine 41. 2 disulfide bridges follow: cysteine 45–cysteine 51 and cysteine 47–cysteine 193. Aspartate 85 provides a ligand contact to Mg(2+).

Belongs to the arthropod phospholipase D family. Class II subfamily. Mg(2+) serves as cofactor. Expressed by the venom gland.

It localises to the secreted. The catalysed reaction is an N-(acyl)-sphingosylphosphocholine = an N-(acyl)-sphingosyl-1,3-cyclic phosphate + choline. It catalyses the reaction an N-(acyl)-sphingosylphosphoethanolamine = an N-(acyl)-sphingosyl-1,3-cyclic phosphate + ethanolamine. It carries out the reaction a 1-acyl-sn-glycero-3-phosphocholine = a 1-acyl-sn-glycero-2,3-cyclic phosphate + choline. The enzyme catalyses a 1-acyl-sn-glycero-3-phosphoethanolamine = a 1-acyl-sn-glycero-2,3-cyclic phosphate + ethanolamine. Functionally, dermonecrotic toxins cleave the phosphodiester linkage between the phosphate and headgroup of certain phospholipids (sphingolipid and lysolipid substrates), forming an alcohol (often choline) and a cyclic phosphate. This toxin acts on sphingomyelin (SM). It may also act on ceramide phosphoethanolamine (CPE), lysophosphatidylcholine (LPC) and lysophosphatidylethanolamine (LPE), but not on lysophosphatidylserine (LPS), and lysophosphatidylglycerol (LPG). It acts by transphosphatidylation, releasing exclusively cyclic phosphate products as second products. Induces dermonecrosis, hemolysis, increased vascular permeability, edema, inflammatory response, and platelet aggregation. In Loxosceles laeta (South American recluse spider), this protein is Dermonecrotic toxin LlSicTox-alphaIV1i.